Here is a 683-residue protein sequence, read N- to C-terminus: Protein zntD (683 aa).

The next 3 helical transmembrane spans lie at 12–32 (IISTTVLFILSLLAGIAPYWM), 42–62 (LSWSNTFAGGVFFGAGMLHLF), and 79–99 (PFAALCLCVGFLITLFLELII). Residues 120 to 129 (VHLSHGHSHH) show a composition bias toward basic residues. Disordered regions lie at residues 120–180 (VHLS…TTTT), 299–325 (GFSNNNNNNNNNNNNNNKNNNNNNNNN), 364–390 (CSNDNSNSNNNNSSNNNSSSANITPNT), and 451–489 (IGNSGNIGSNNNNNNNGGGGGGGGNSNIDYNDNEENNNN). The span at 137 to 149 (GNPGSGVGIGMGS) shows a compositional bias: gly residues. 2 stretches are compositionally biased toward low complexity: residues 160 to 180 (TTSPTITPTTPSEGTTTTTTT) and 302 to 325 (NNNNNNNNNNNNNNKNNNNNNNNN). The segment covering 451-465 (IGNSGNIGSNNNNNN) has biased composition (low complexity). The segment covering 466–475 (NGGGGGGGGN) has biased composition (gly residues). Residues 476 to 489 (SNIDYNDNEENNNN) show a composition bias toward low complexity. Transmembrane regions (helical) follow at residues 534–554 (ILLPFILVIALSIHSLFEGLA), 564–584 (VFDILIAIFAHKILASFALGI), 600–620 (FLLVFVFSLTSPIGSILGMVI), 631–651 (PPILQGIASGTFLYVAVVEII), and 662–682 (ILIKSFLLLLGFSGMAVVAIW).

It belongs to the ZIP transporter (TC 2.A.5) family.

It localises to the membrane. In terms of biological role, may transport divalent cations. May participate, with dstA, in the regulation of the differentiation of stalk cells during development. The sequence is that of Protein zntD (zntD) from Dictyostelium discoideum (Social amoeba).